The primary structure comprises 222 residues: Endonuclease V (222 aa).

Asp-43 and Asp-109 together coordinate Mg(2+).

This sequence belongs to the endonuclease V family. It depends on Mg(2+) as a cofactor.

The protein localises to the cytoplasm. It catalyses the reaction Endonucleolytic cleavage at apurinic or apyrimidinic sites to products with a 5'-phosphate.. Functionally, DNA repair enzyme involved in the repair of deaminated bases. Selectively cleaves double-stranded DNA at the second phosphodiester bond 3' to a deoxyinosine leaving behind the intact lesion on the nicked DNA. In Roseiflexus castenholzii (strain DSM 13941 / HLO8), this protein is Endonuclease V.